A 75-amino-acid polypeptide reads, in one-letter code: Putative snRNP Sm-like protein (75 aa).

Residues 4-75 (RPLDVIHRSL…NVLAISPTEE (72 aa)) form the Sm domain.

The protein belongs to the snRNP Sm proteins family.

This chain is Putative snRNP Sm-like protein, found in Pyrococcus horikoshii (strain ATCC 700860 / DSM 12428 / JCM 9974 / NBRC 100139 / OT-3).